The following is a 110-amino-acid chain: MKKVLGVILGGLLLLPVVSNAADAQKAADNKKPVNSWTCEDFLAVDESFQPTAVGFAEALNNKDKPEDAVLDVQGIATVTPAIVQACTQDKQANFKDKVKGEWDKIKKDM.

Positions 1-21 (MKKVLGVILGGLLLLPVVSNA) are cleaved as a signal peptide. C39 and C87 form a disulfide bridge.

It belongs to the HdeA family.

It is found in the periplasm. In terms of biological role, required for optimal acid stress protection. Exhibits a chaperone-like activity only at low pH by suppressing non-specifically the aggregation of denaturated periplasmic proteins. The chain is Acid stress chaperone HdeA from Escherichia coli O157:H7.